The chain runs to 336 residues: Dihydroorotate dehydrogenase (quinone) (336 aa).

FMN-binding positions include 62–66 and T86; that span reads AGLDK. Residue K66 participates in substrate binding. 111–115 lines the substrate pocket; the sequence is NRMGF. FMN-binding residues include N139 and N172. N172 contributes to the substrate binding site. S175 serves as the catalytic Nucleophile. Substrate is bound at residue N177. Positions 217 and 245 each coordinate FMN. Residue 246–247 participates in substrate binding; it reads NT. FMN contacts are provided by residues G268, G297, and 318 to 319; that span reads YS.

It belongs to the dihydroorotate dehydrogenase family. Type 2 subfamily. In terms of assembly, monomer. Requires FMN as cofactor.

The protein localises to the cell membrane. It catalyses the reaction (S)-dihydroorotate + a quinone = orotate + a quinol. The protein operates within pyrimidine metabolism; UMP biosynthesis via de novo pathway; orotate from (S)-dihydroorotate (quinone route): step 1/1. Functionally, catalyzes the conversion of dihydroorotate to orotate with quinone as electron acceptor. In Salmonella arizonae (strain ATCC BAA-731 / CDC346-86 / RSK2980), this protein is Dihydroorotate dehydrogenase (quinone).